A 406-amino-acid chain; its full sequence is Vacuole membrane protein 1 (406 aa).

Basic and acidic residues predominate over residues 1-20; the sequence is MAENGKNCDQRRIAMSKDQH. The disordered stretch occupies residues 1–37; that stretch reads MAENGKNCDQRRIAMSKDQHNGSLTDPSSVHEKKRRD. Ala-2 carries the post-translational modification N-acetylalanine. Residues 2 to 77 are Cytoplasmic-facing; sequence AENGKNCDQR…WTSKLWHRQS (76 aa). The helical transmembrane segment at 78–98 threads the bilayer; that stretch reads IVVSFLLLLAALVATYYVEGA. Residues 99–109 lie on the Extracellular side of the membrane; it reads HQQYVQRIEKQ. Residues 110–130 form a helical membrane-spanning segment; sequence FLLYAYWIGLGILSSVGLGTG. Residues 131–250 lie on the Cytoplasmic side of the membrane; that stretch reads LHTFLLYLGP…ASRAKLAVQK (120 aa). Positions 173 to 316 are VTT domain; the sequence is GAEGAISLWS…FVIVTFSKHI (144 aa). A helical transmembrane segment spans residues 251 to 271; the sequence is LVQKVGFFGILACASIPNPLF. The Extracellular segment spans residues 272–273; the sequence is DL. Residues 274 to 294 form a helical membrane-spanning segment; that stretch reads AGITCGHFLVPFWTFFGATLI. Residues 295-305 are Cytoplasmic-facing; that stretch reads GKAIIKMHIQK. Residues 306–326 form a helical membrane-spanning segment; that stretch reads IFVIVTFSKHIVEQMVTFIGA. The Extracellular segment spans residues 327 to 363; sequence VPGIGPSLQKPFQEYLEAQRQKLHHRSEAGTPQGENW. A helical transmembrane segment spans residues 364–384; that stretch reads LSWMFEKLVVAMVCYFVLSII. Residues 385 to 406 lie on the Cytoplasmic side of the membrane; it reads NSMAQNYAKRIQQRLNSEEKTK.

It belongs to the VMP1 family. In terms of assembly, interacts with BECN1. Interacts with TJP1. Interacts with TP53INP2. Interacts with TMEM41B. Interacts with ATP2A2, PLN and SLN; competes with PLN and SLN to prevent them from forming an inhibitory complex with ATP2A2. Interacts with ATG2A.

It is found in the endoplasmic reticulum-Golgi intermediate compartment membrane. The protein localises to the cell membrane. It localises to the vacuole membrane. Its subcellular location is the endoplasmic reticulum membrane. The catalysed reaction is a 1,2-diacyl-sn-glycero-3-phospho-L-serine(in) = a 1,2-diacyl-sn-glycero-3-phospho-L-serine(out). It catalyses the reaction cholesterol(in) = cholesterol(out). The enzyme catalyses a 1,2-diacyl-sn-glycero-3-phosphocholine(in) = a 1,2-diacyl-sn-glycero-3-phosphocholine(out). It carries out the reaction a 1,2-diacyl-sn-glycero-3-phosphoethanolamine(in) = a 1,2-diacyl-sn-glycero-3-phosphoethanolamine(out). Functionally, phospholipid scramblase involved in lipid homeostasis and membrane dynamics processes. Has phospholipid scramblase activity toward cholesterol and phosphatidylserine, as well as phosphatidylethanolamine and phosphatidylcholine. Required for autophagosome formation: participates in early stages of autophagosome biogenesis at the endoplasmic reticulum (ER) membrane by reequilibrating the leaflets of the ER as lipids are extracted by ATG2 (ATG2A or ATG2B) to mediate autophagosome assembly. Regulates ATP2A2 activity to control ER-isolation membrane contacts for autophagosome formation. In addition to autophagy, involved in other processes in which phospholipid scramblase activity is required. Modulates ER contacts with lipid droplets, mitochondria and endosomes. Plays an essential role in formation of cell junctions. Upon stress such as bacterial and viral infection, promotes formation of cytoplasmic vacuoles followed by cell death. Involved in the cytoplasmic vacuolization of acinar cells during the early stage of acute pancreatitis. This Mus musculus (Mouse) protein is Vacuole membrane protein 1.